The primary structure comprises 217 residues: Uracil-DNA glycosylase (217 aa).

Aspartate 62 (proton acceptor) is an active-site residue.

Belongs to the uracil-DNA glycosylase (UDG) superfamily. UNG family.

The protein resides in the cytoplasm. It carries out the reaction Hydrolyzes single-stranded DNA or mismatched double-stranded DNA and polynucleotides, releasing free uracil.. Functionally, excises uracil residues from the DNA which can arise as a result of misincorporation of dUMP residues by DNA polymerase or due to deamination of cytosine. This chain is Uracil-DNA glycosylase, found in Streptococcus pyogenes serotype M49 (strain NZ131).